The following is a 242-amino-acid chain: GDSL esterase/lipase At5g62930 (242 aa).

The active-site Nucleophile is the serine 11. Positions proline 223–leucine 242 are disordered.

This sequence belongs to the 'GDSL' lipolytic enzyme family.

This chain is GDSL esterase/lipase At5g62930, found in Arabidopsis thaliana (Mouse-ear cress).